The primary structure comprises 616 residues: Zinc metalloproteinase-disintegrin-like VLAIP-A (616 aa).

A signal peptide spans 1–20; that stretch reads MMQVLLVTISLAVFPYQGSS. Positions 21–194 are excised as a propeptide; that stretch reads IILESGNVND…KASQLNLTPE (174 aa). Q195 carries the post-translational modification Pyrrolidone carboxylic acid. The Peptidase M12B domain maps to 203 to 399; that stretch reads KYIKLVIVAD…KMPQCILNKP (197 aa). Intrachain disulfides connect C314-C394, C354-C378, and C356-C361. H339 contacts Zn(2+). E340 is a catalytic residue. Zn(2+) contacts are provided by H343 and H349. N377 is a glycosylation site (N-linked (GlcNAc...) asparagine). Residues 407–493 enclose the Disintegrin domain; it reads PAVCGNYLVE…ECPTDQFQRN (87 aa). The Ca(2+) site is built by V409, N412, L414, E416, E419, and D422. 14 disulfide bridges follow: C410–C439, C421–C434, C423–C429, C433–C456, C447–C453, C452–C478, C465–C485, C472–C504, C497–C509, C516–C566, C531–C577, C544–C554, C561–C603, and C597–C609. The D/ECD-tripeptide motif lies at 471–473; sequence ECD.

The protein belongs to the venom metalloproteinase (M12B) family. P-III subfamily. P-IIIc sub-subfamily. Heterodimer; disulfide-linked. It depends on Zn(2+) as a cofactor. The N-terminus is blocked. As to expression, expressed by the venom gland.

It is found in the secreted. With respect to regulation, inhibited by EDTA or 1,10-phenanthroline. Not inhibited by PMSF. Functionally, snake venom zinc metalloprotease that hydrolyzes the alpha-chain (FGA) and more slowly the beta-chain (FGB) of fibrinogen, without affecting the gamma-chain. Cleaves alpha-chain of fibrinogen at '432-Lys-|-Leu-433' and '535-Pro-|-Met-536' bonds. Induces apoptosis in vascular endothelial cells and inhibits endothelial cell adhesion to extracellular matrix proteins such as fibrinogen, fibronectin, vitronectin, collagen I, and collagen IV. Also hydrolyzes azocasein, and insulin B-chain (at the '38-Ala-|-Leu-39' bond). The protein is Zinc metalloproteinase-disintegrin-like VLAIP-A of Macrovipera lebetinus (Levantine viper).